The chain runs to 239 residues: Ubiquinone biosynthesis O-methyltransferase (239 aa).

The S-adenosyl-L-methionine site is built by R44, G63, D84, and M128.

It belongs to the methyltransferase superfamily. UbiG/COQ3 family.

It carries out the reaction a 3-demethylubiquinol + S-adenosyl-L-methionine = a ubiquinol + S-adenosyl-L-homocysteine + H(+). It catalyses the reaction a 3-(all-trans-polyprenyl)benzene-1,2-diol + S-adenosyl-L-methionine = a 2-methoxy-6-(all-trans-polyprenyl)phenol + S-adenosyl-L-homocysteine + H(+). It functions in the pathway cofactor biosynthesis; ubiquinone biosynthesis. Functionally, O-methyltransferase that catalyzes the 2 O-methylation steps in the ubiquinone biosynthetic pathway. This Xanthomonas campestris pv. campestris (strain 8004) protein is Ubiquinone biosynthesis O-methyltransferase.